The primary structure comprises 314 residues: Olfactory receptor 4K2 (314 aa).

Residues 1–25 (MDVGNKSTMSEFVLLGLSNSWELQM) are Extracellular-facing. N-linked (GlcNAc...) asparagine glycosylation occurs at N5. The chain crosses the membrane as a helical span at residues 26–49 (FFFMVFSLLYVATMVGNSLIVITV). Over 50–57 (IVDPHLHS) the chain is Cytoplasmic. The chain crosses the membrane as a helical span at residues 58–79 (PMYFLLTNLSIIDMSLASFATP). The Extracellular segment spans residues 80-100 (KMITDYLTGHKTISFDGCLTQ). C97 and C189 are disulfide-bonded. A helical membrane pass occupies residues 101–120 (IFFLHLFTGTEIILLMAMSF). Residues 121–139 (DRYIAICKPLHYASVISPQ) are Cytoplasmic-facing. A helical membrane pass occupies residues 140–158 (VCVALVVASWIMGVMHSMS). Residues 159–195 (QVIFALTLPFCGPYEVDSFFCDLPVVFQLACVDTYVL) lie on the Extracellular side of the membrane. Residues 196 to 219 (GLFMISTSGIIALSCFIVLFNSYV) form a helical membrane-spanning segment. The Cytoplasmic portion of the chain corresponds to 220–235 (IVLVTVKHHSSRGSSK). A helical membrane pass occupies residues 236-258 (ALSTCTAHFIVVFLFFGPCIFIY). The Extracellular portion of the chain corresponds to 259 to 269 (MWPLSSFLTDK). The chain crosses the membrane as a helical span at residues 270–289 (ILSVFYTIFTPTLNPIIYTL). Residues 290-314 (RNQEVKIAMRKLKNRFLNFNKAMPS) lie on the Cytoplasmic side of the membrane.

The protein belongs to the G-protein coupled receptor 1 family.

The protein localises to the cell membrane. Functionally, odorant receptor. The polypeptide is Olfactory receptor 4K2 (OR4K2) (Homo sapiens (Human)).